Reading from the N-terminus, the 395-residue chain is Phosphopentomutase (395 aa).

Asp10, Asp294, His299, Asp335, His336, and His347 together coordinate Mn(2+).

Belongs to the phosphopentomutase family. Requires Mn(2+) as cofactor.

The protein resides in the cytoplasm. It catalyses the reaction 2-deoxy-alpha-D-ribose 1-phosphate = 2-deoxy-D-ribose 5-phosphate. The enzyme catalyses alpha-D-ribose 1-phosphate = D-ribose 5-phosphate. The protein operates within carbohydrate degradation; 2-deoxy-D-ribose 1-phosphate degradation; D-glyceraldehyde 3-phosphate and acetaldehyde from 2-deoxy-alpha-D-ribose 1-phosphate: step 1/2. In terms of biological role, isomerase that catalyzes the conversion of deoxy-ribose 1-phosphate (dRib-1-P) and ribose 1-phosphate (Rib-1-P) to deoxy-ribose 5-phosphate (dRib-5-P) and ribose 5-phosphate (Rib-5-P), respectively. The protein is Phosphopentomutase of Actinobacillus succinogenes (strain ATCC 55618 / DSM 22257 / CCUG 43843 / 130Z).